The sequence spans 207 residues: MTHPDEKPWILGLTGGIGSGKSAAAKCFSDLGIDTVDADHAARWVVEPGRPALEQIAAHFGKGVLQTSGELDRGALRKLIFETPEQRRWLEALLHPLINQEIVSHLAKAKSPYAILVSPLLVESGQYRMVQRLLVIDAPAHLQIERTMLRDSSSQEQVEAILKVQIQREDRLRHANDVLVNDRDHAWLSSEVERLHHFYLTLRGGQS.

Positions 10 to 207 constitute a DPCK domain; it reads ILGLTGGIGS…FYLTLRGGQS (198 aa). 18-23 provides a ligand contact to ATP; sequence GSGKSA.

It belongs to the CoaE family.

The protein localises to the cytoplasm. The enzyme catalyses 3'-dephospho-CoA + ATP = ADP + CoA + H(+). Its pathway is cofactor biosynthesis; coenzyme A biosynthesis; CoA from (R)-pantothenate: step 5/5. Its function is as follows. Catalyzes the phosphorylation of the 3'-hydroxyl group of dephosphocoenzyme A to form coenzyme A. The protein is Dephospho-CoA kinase of Pseudomonas syringae pv. syringae (strain B728a).